Here is a 327-residue protein sequence, read N- to C-terminus: Ribosomal RNA small subunit methyltransferase H (327 aa).

Residues 37 to 39, aspartate 55, phenylalanine 82, aspartate 99, and glutamine 106 contribute to the S-adenosyl-L-methionine site; that span reads GGY. The interval 303–327 is disordered; it reads IATRTDAPAQPVAPETLGLPQLEGF.

The protein belongs to the methyltransferase superfamily. RsmH family.

The protein resides in the cytoplasm. It catalyses the reaction cytidine(1402) in 16S rRNA + S-adenosyl-L-methionine = N(4)-methylcytidine(1402) in 16S rRNA + S-adenosyl-L-homocysteine + H(+). Specifically methylates the N4 position of cytidine in position 1402 (C1402) of 16S rRNA. The polypeptide is Ribosomal RNA small subunit methyltransferase H (Jannaschia sp. (strain CCS1)).